We begin with the raw amino-acid sequence, 136 residues long: Histone H2A (136 aa).

Over residues 1-11 the composition is skewed to gly residues; that stretch reads MSSGGKSGGKA. Residues 1-24 are disordered; it reads MSSGGKSGGKAGDASSKAQSRSAK. 2 positions are modified to N6-acetyllysine: Lys-6 and Lys-10. A compositionally biased stretch (low complexity) spans 12–24; that stretch reads GDASSKAQSRSAK. Gln-108 bears the N5-methylglutamine mark. Ser-133 carries the post-translational modification Phosphoserine. The [ST]-Q motif signature appears at 133–134; that stretch reads SQ.

The protein belongs to the histone H2A family. In terms of assembly, the nucleosome is a histone octamer containing two molecules each of H2A, H2B, H3 and H4 assembled in one H3-H4 heterotetramer and two H2A-H2B heterodimers. The octamer wraps approximately 147 bp of DNA. In terms of processing, phosphorylated to form H2AS128ph (gamma-H2A) in response to DNA double-strand breaks (DSBs) generated by exogenous genotoxic agents and by stalled replication forks. Phosphorylation is dependent on the DNA damage checkpoint kinases MEC1/ATR and TEL1/ATM, spreads on either side of a detected DSB site and may mark the surrounding chromatin for recruitment of proteins required for DNA damage signaling and repair. Gamma-H2A is removed from the DNA prior to the strand invasion-primer extension step of the repair process and subsequently dephosphorylated. Dephosphorylation is necessary for efficient recovery from the DNA damage checkpoint. Acetylated by ESA1 to form H2AK4ac and H2AK7ac.

The protein resides in the nucleus. It localises to the chromosome. Functionally, core component of nucleosome which plays a central role in DNA double strand break (DSB) repair. Nucleosomes wrap and compact DNA into chromatin, limiting DNA accessibility to the cellular machineries which require DNA as a template. Histones thereby play a central role in transcription regulation, DNA repair, DNA replication and chromosomal stability. DNA accessibility is regulated via a complex set of post-translational modifications of histones, also called histone code, and nucleosome remodeling. The chain is Histone H2A (HTA1) from Mycosarcoma maydis (Corn smut fungus).